A 199-amino-acid polypeptide reads, in one-letter code: Recombination protein RecR (199 aa).

The segment at cysteine 57–cysteine 72 adopts a C4-type zinc-finger fold. The region spanning serine 80–serine 176 is the Toprim domain.

The protein belongs to the RecR family.

In terms of biological role, may play a role in DNA repair. It seems to be involved in an RecBC-independent recombinational process of DNA repair. It may act with RecF and RecO. This is Recombination protein RecR from Limosilactobacillus fermentum (strain NBRC 3956 / LMG 18251) (Lactobacillus fermentum).